The following is a 173-amino-acid chain: Nucleoside-triphosphatase THEP1 (173 aa).

Residues 15–22 (GMPGVGKT) and 101–108 (LKIIDEIG) contribute to the ATP site.

The protein belongs to the THEP1 NTPase family.

It carries out the reaction a ribonucleoside 5'-triphosphate + H2O = a ribonucleoside 5'-diphosphate + phosphate + H(+). Functionally, has nucleotide phosphatase activity towards ATP, GTP, CTP, TTP and UTP. May hydrolyze nucleoside diphosphates with lower efficiency. The sequence is that of Nucleoside-triphosphatase THEP1 from Pyrobaculum aerophilum (strain ATCC 51768 / DSM 7523 / JCM 9630 / CIP 104966 / NBRC 100827 / IM2).